The sequence spans 403 residues: Pantothenate kinase (403 aa).

3 positions are modified to phosphoserine: Ser80, Ser82, and Ser84.

The protein belongs to the type II pantothenate kinase family.

It localises to the cytoplasm. Its subcellular location is the nucleus. It catalyses the reaction (R)-pantothenate + ATP = (R)-4'-phosphopantothenate + ADP + H(+). The protein operates within cofactor biosynthesis; coenzyme A biosynthesis; CoA from (R)-pantothenate: step 1/5. With respect to regulation, regulated by feedback inhibition by malonyl-CoA. Functionally, plays a role in the physiological regulation of the intracellular CoA concentration. The protein is Pantothenate kinase of Schizosaccharomyces pombe (strain 972 / ATCC 24843) (Fission yeast).